We begin with the raw amino-acid sequence, 38 residues long: Photosystem II reaction center protein L (38 aa).

Residues 17–37 (SLFWGLLLIFVLAVLFSSYFF) form a helical membrane-spanning segment.

It belongs to the PsbL family. In terms of assembly, PSII is composed of 1 copy each of membrane proteins PsbA, PsbB, PsbC, PsbD, PsbE, PsbF, PsbH, PsbI, PsbJ, PsbK, PsbL, PsbM, PsbT, PsbX, PsbY, PsbZ, Psb30/Ycf12, at least 3 peripheral proteins of the oxygen-evolving complex and a large number of cofactors. It forms dimeric complexes.

It is found in the plastid. The protein localises to the chloroplast thylakoid membrane. Functionally, one of the components of the core complex of photosystem II (PSII). PSII is a light-driven water:plastoquinone oxidoreductase that uses light energy to abstract electrons from H(2)O, generating O(2) and a proton gradient subsequently used for ATP formation. It consists of a core antenna complex that captures photons, and an electron transfer chain that converts photonic excitation into a charge separation. This subunit is found at the monomer-monomer interface and is required for correct PSII assembly and/or dimerization. This Zygnema circumcarinatum (Green alga) protein is Photosystem II reaction center protein L.